We begin with the raw amino-acid sequence, 357 residues long: MEKLLGQAMPLGCIMVDLESTTLQPHEKERLLDPLVAGVILFSRNYESIEQLQALTTEIHQLRHPKLLIAVDHEGGRVQRFKEGFSMLPAMGQLGKCFRANEKEGLELAQQVGWLMATELLAVGVDFSFAPVVDLDYGDSRVIGDRAFDSDPVIVGKLGKALVQGMRDAGMASVAKHFPGHGYIQADTHLEVAVDHREFQEIAHKDIQPFLKLIENGLDAVMPAHVRYPKVDDLPAGFSKVWLQEVLRQQCYFDGAIISDDMSMHAATEFGDAPTRVTAALKAGCDLVLVCNDPVAADEVLSQVTWETGPLSHARLIRLHGKGHLKLSQLHNNPLWQSRASHVSHFLNSVNQQGLLV.

Residues Asp72, Arg80, Arg146, and 176-177 (KH) each bind substrate. His189 serves as the catalytic Proton donor/acceptor. The active-site Nucleophile is Asp260.

It belongs to the glycosyl hydrolase 3 family. NagZ subfamily.

It localises to the cytoplasm. The catalysed reaction is Hydrolysis of terminal non-reducing N-acetyl-D-hexosamine residues in N-acetyl-beta-D-hexosaminides.. The protein operates within cell wall biogenesis; peptidoglycan recycling. Functionally, plays a role in peptidoglycan recycling by cleaving the terminal beta-1,4-linked N-acetylglucosamine (GlcNAc) from peptide-linked peptidoglycan fragments, giving rise to free GlcNAc, anhydro-N-acetylmuramic acid and anhydro-N-acetylmuramic acid-linked peptides. The chain is Beta-hexosaminidase from Hydrogenovibrio crunogenus (strain DSM 25203 / XCL-2) (Thiomicrospira crunogena).